The sequence spans 73 residues: Large ribosomal subunit protein bL31 (73 aa).

Residues 34 to 43 (KMNLDIDPKS) are compositionally biased toward basic and acidic residues. The segment at 34–54 (KMNLDIDPKSHPAWTGGTQQM) is disordered.

It belongs to the bacterial ribosomal protein bL31 family. Type A subfamily. Part of the 50S ribosomal subunit.

Binds the 23S rRNA. This is Large ribosomal subunit protein bL31 from Rhodopseudomonas palustris (strain BisA53).